The primary structure comprises 179 residues: UPF0227 protein Sbal195_2522 (179 aa).

The protein belongs to the UPF0227 family.

This chain is UPF0227 protein Sbal195_2522, found in Shewanella baltica (strain OS195).